We begin with the raw amino-acid sequence, 147 residues long: Large ribosomal subunit protein bL9 (147 aa).

It belongs to the bacterial ribosomal protein bL9 family.

Binds to the 23S rRNA. The protein is Large ribosomal subunit protein bL9 of Phocaeicola vulgatus (strain ATCC 8482 / DSM 1447 / JCM 5826 / CCUG 4940 / NBRC 14291 / NCTC 11154) (Bacteroides vulgatus).